The primary structure comprises 166 residues: D-aminoacyl-tRNA deacylase (166 aa).

Residues 142–143 (GP) carry the Gly-cisPro motif, important for rejection of L-amino acids motif.

Belongs to the DTD family. In terms of assembly, homodimer.

Its subcellular location is the cytoplasm. The enzyme catalyses glycyl-tRNA(Ala) + H2O = tRNA(Ala) + glycine + H(+). It catalyses the reaction a D-aminoacyl-tRNA + H2O = a tRNA + a D-alpha-amino acid + H(+). Its function is as follows. An aminoacyl-tRNA editing enzyme that deacylates mischarged D-aminoacyl-tRNAs. Also deacylates mischarged glycyl-tRNA(Ala), protecting cells against glycine mischarging by AlaRS. Acts via tRNA-based rather than protein-based catalysis; rejects L-amino acids rather than detecting D-amino acids in the active site. By recycling D-aminoacyl-tRNA to D-amino acids and free tRNA molecules, this enzyme counteracts the toxicity associated with the formation of D-aminoacyl-tRNA entities in vivo and helps enforce protein L-homochirality. This is D-aminoacyl-tRNA deacylase from Ralstonia nicotianae (strain ATCC BAA-1114 / GMI1000) (Ralstonia solanacearum).